Consider the following 152-residue polypeptide: Transcriptional regulator MraZ (152 aa).

SpoVT-AbrB domains follow at residues 5-52 (ATQI…TLSE) and 81-124 (ASEC…DEQA).

The protein belongs to the MraZ family. As to quaternary structure, forms oligomers.

It is found in the cytoplasm. The protein localises to the nucleoid. In terms of biological role, negatively regulates its own expression and that of the subsequent genes in the proximal part of the division and cell wall (dcw) gene cluster. Acts by binding directly to DNA. May also regulate the expression of genes outside the dcw cluster. In Photorhabdus laumondii subsp. laumondii (strain DSM 15139 / CIP 105565 / TT01) (Photorhabdus luminescens subsp. laumondii), this protein is Transcriptional regulator MraZ.